Reading from the N-terminus, the 209-residue chain is Large ribosomal subunit protein uL3 (209 aa).

Gln150 is subject to N5-methylglutamine.

The protein belongs to the universal ribosomal protein uL3 family. As to quaternary structure, part of the 50S ribosomal subunit. Forms a cluster with proteins L14 and L19. In terms of processing, methylated by PrmB.

Its function is as follows. One of the primary rRNA binding proteins, it binds directly near the 3'-end of the 23S rRNA, where it nucleates assembly of the 50S subunit. The chain is Large ribosomal subunit protein uL3 from Vibrio parahaemolyticus serotype O3:K6 (strain RIMD 2210633).